The primary structure comprises 905 residues: MFSILKKLFGTANDRTVKKLFSEITKINSLEPAIKILSDAALKNKTVEFKEKLKNGATLDDILYEAFAVVREAASRVCGMRHFDVQLIGGLILHRGMIAEMRTGEGKTLVATLPAYLNALTGKGVHVVTVNDYLAIRDSASMGKIYNFLGLSVGCIVAGMTDEAKRIAYNSDITHATNNELGFDYLRDNMKYSMQERVLRPFNFAIIDEVDSILIDEARTPIVISGPVNDNSALYGKIDKIIRLLNDSDFEKDEKLKTINLTEVGITNIESLLIKDGIIKPDTGLYDFENLNLVHYVNQALRAHHMFTVDVDYLVREGKVMIIDEFTGRVMEGRRYSEGLHQALEAKENVKIQNENQTLASITFQNYFRNYHKLSGMTGTSMTEASELKDIYNLDVVAVPTHNKVTRIDLDDEIYGSKQEKYDAILKLIRDCYNRGQPILVGTISIEKSEELSSILNKEKIPHNVLNAKFHEQEAFIIAQAGRFKAVTIATNMAGRGTDIMLGGNPEMLIEQLNKDRNYVAKTAEIKAQIAEEKQKVIETGGLFVIGTERHESRRIDNQLRGRSGRQGDPGKTQFFLSLDDDLMRIFASDRISGVLRTLGLKNGEAIHHPMISRSLEKAQQKVEAHNYEMRKNLLRFDDVMNDQRKIIYEQRTEIIKSKDSYGFLNSTTEELARKIVLTFMPLGSYREDWDIDNLTVELHRIFSIKFDHNLVHKNDVTEEDITKLVIQMAHDIYKSKEEAYSSELMNNAVKYILLTTLDQVWKDHLYSLDHLRQGISLRAYAQKDPLSEYKREAFNLFEQMLNNLKELFIQTVYHFHIDLRHLQKEDISLEHKKLQKNMCESREDPAFSKYNAGNSIETYLKPVVLRVDPKDRKPDDPMSWGRVSRNELCPCGSGKKYKYCHGAN.

Residues glutamine 86, 104 to 108 (GEGKT), and aspartate 499 each bind ATP. Positions 890, 892, 901, and 902 each coordinate Zn(2+).

It belongs to the SecA family. In terms of assembly, monomer and homodimer. Part of the essential Sec protein translocation apparatus which comprises SecA, SecYEG and auxiliary proteins SecDF-YajC and YidC. It depends on Zn(2+) as a cofactor.

The protein resides in the cell inner membrane. The protein localises to the cytoplasm. The catalysed reaction is ATP + H2O + cellular proteinSide 1 = ADP + phosphate + cellular proteinSide 2.. Functionally, part of the Sec protein translocase complex. Interacts with the SecYEG preprotein conducting channel. Has a central role in coupling the hydrolysis of ATP to the transfer of proteins into and across the cell membrane, serving both as a receptor for the preprotein-SecB complex and as an ATP-driven molecular motor driving the stepwise translocation of polypeptide chains across the membrane. This is Protein translocase subunit SecA from Rickettsia typhi (strain ATCC VR-144 / Wilmington).